Consider the following 503-residue polypeptide: Arabinose import ATP-binding protein AraG 1 (503 aa).

2 consecutive ABC transporter domains span residues Leu5 to Arg240 and Arg251 to Thr497. Gly37 to Ser44 is an ATP binding site.

This sequence belongs to the ABC transporter superfamily. Arabinose importer (TC 3.A.1.2.2) family. In terms of assembly, the complex is composed of two ATP-binding proteins (AraG), two transmembrane proteins (AraH) and a solute-binding protein (AraF).

The protein resides in the cell inner membrane. It carries out the reaction L-arabinose(out) + ATP + H2O = L-arabinose(in) + ADP + phosphate + H(+). Its function is as follows. Part of the ABC transporter complex AraFGH involved in arabinose import. Responsible for energy coupling to the transport system. This is Arabinose import ATP-binding protein AraG 1 from Burkholderia cenocepacia (strain HI2424).